The primary structure comprises 97 residues: UPF0235 protein Daro_3887 (97 aa).

This sequence belongs to the UPF0235 family.

The protein is UPF0235 protein Daro_3887 of Dechloromonas aromatica (strain RCB).